The sequence spans 55 residues: Large ribosomal subunit protein bL33 (55 aa).

Belongs to the bacterial ribosomal protein bL33 family.

The protein is Large ribosomal subunit protein bL33 of Orientia tsutsugamushi (strain Boryong) (Rickettsia tsutsugamushi).